A 635-amino-acid chain; its full sequence is MPARSAVVVIAMEPSSSITIASSSSYLSNGSSPCSVSLAPPGAGAVAAQAAPVAAGEGGGGGGGGGGGGSSSVEVVSLNRLSANLERLLLDSDLDCSDADVDVADGGPPVPVHRCILAARSTFFYNLFAARGRGGDGAAGGGGGGGGGGGERTGGRPRYKMEELVPGGRVGRDAFLSLLGYLYTGKLRPAPDDVVSCADPMCPHDSCPPAIRFNVEQMYAAWAFKITELISLFQRRLLNFVDKTLVEDVLPILQVAFHSELTPVLEKCIRRIARSNLDNVSLDKELPPEVAVQIKEIRQKSQPNEGDTVISDPVHEKRVRRIHRALDSDDVELVKLLLNESEITLDDANALHYAAAYCDSKVVSELLDLRLANLNLKNSRGYTALHLAAMRREPAIIMCLLNKGAAVSQLTADGQSAMSICRRLTRMKDYNTKMEQGQESNKDRLCIDILDREMIRKPMAVEDSVTSPLLADDLHMKLLYLENRVAFARLFFPAEAKVAMQIAQADTTPEFGIVPAASTSGKLKEVDLNETPVTQNKRLRSRVDALMKTVELGRRYFPNCSQVLDKFLEDDLPDSPDALDLQNGTSDEQNVKRMRFCELKEDVRKAFSKDRADNSMFSILSSSSSSSPPPKVAKK.

A BTB domain is found at 97-191 (SDADVDVADG…LYTGKLRPAP (95 aa)). Gly residues predominate over residues 138 to 152 (AAGGGGGGGGGGGER). Positions 138 to 157 (AAGGGGGGGGGGGERTGGRP) are disordered. A C2HC NPR-type zinc finger spans residues 194 to 208 (VVSCADPMCPHDSCP). Zn(2+) contacts are provided by Cys197, Cys202, His204, and Cys207. ANK repeat units lie at residues 317-347 (KRVR…TLDD), 349-376 (NALH…NLNL), and 380-409 (RGYT…AVSQ). The segment at 439 to 576 (ESNKDRLCID…FLEDDLPDSP (138 aa)) is salicylic acid-binding core (SBC). Arg484 lines the salicylate pocket.

Belongs to the plant 'ANKYRIN-BTB/POZ' family. 'NPR1-like' subfamily. As to quaternary structure, interacts with NRR. Interacts with TGAL1 and TGAL11.

It localises to the nucleus. It participates in protein modification; protein ubiquitination. In terms of biological role, salicylic acid (SA)-binding substrate-specific adapter of an E3 ubiquitin-protein ligase complex (CUL3-RBX1-BTB) which mediates the ubiquitination and subsequent proteasomal degradation of target proteins. May be involved in regulating basal defense responses against pathogens, and may be involved in crosstalk between SA- and JA-dependent signaling pathways. Does not seem to be involved in defense response against the bacterial blight disease caused by Xanthomonas oryzae pv. oryzae (Xoo). Over-expression of NPR2/NH2 does not confer disease resistance to Xoo. This chain is BTB/POZ domain and ankyrin repeat-containing protein NPR2, found in Oryza sativa subsp. japonica (Rice).